A 585-amino-acid chain; its full sequence is Arginine--tRNA ligase (585 aa).

Positions 127–137 (PNTNKPLHVGH) match the 'HIGH' region motif.

Belongs to the class-I aminoacyl-tRNA synthetase family. In terms of assembly, monomer.

It is found in the cytoplasm. It carries out the reaction tRNA(Arg) + L-arginine + ATP = L-arginyl-tRNA(Arg) + AMP + diphosphate. This chain is Arginine--tRNA ligase (argS), found in Borreliella burgdorferi (strain ATCC 35210 / DSM 4680 / CIP 102532 / B31) (Borrelia burgdorferi).